The primary structure comprises 1305 residues: Cyclin-G-associated kinase (1305 aa).

S2 carries the post-translational modification N-acetylserine. 2 positions are modified to phosphoserine: S2 and S16. The Protein kinase domain occupies 40 to 317; the sequence is LRVRRVLAEG…EVVRQLQEIA (278 aa). Residues 46–54 and K69 contribute to the ATP site; that span reads LAEGGFAFV. D173 acts as the Proton acceptor in catalysis. The Phosphatase tensin-type domain maps to 397–564; that stretch reads SVANYAKGDL…EYVCDMVAEE (168 aa). At S454 the chain carries Phosphoserine. One can recognise a C2 tensin-type domain in the interval 570–708; it reads SKPMLVKSVV…FQVNLEVEVE (139 aa). Disordered stretches follow at residues 707–732 and 747–854; these read VEPR…NPKI and FGKP…AAGT. S768 is modified (phosphoserine). The residue at position 774 (T774) is a Phosphothreonine. The segment covering 776–789 has biased composition (polar residues); it reads SDSPQSSSTDTNHF. Phosphoserine is present on S781. At T792 the chain carries Phosphothreonine. The segment covering 805-816 has biased composition (polar residues); the sequence is LDNTSPKESQSV. Residues S809, S824, and S827 each carry the phosphoserine modification. The segment covering 822–832 has biased composition (acidic residues); it reads DGSEVSDEEEA. Residues 836 to 848 are compositionally biased toward basic and acidic residues; sequence SEERKPGAGEDTP. S938 is modified (phosphoserine). Residues 1037 to 1139 form a disordered region; the sequence is DTWADTATPG…WTPQAKPAPR (103 aa). Residues 1084–1099 show a composition bias toward low complexity; it reads DLSDLSSSLQGLPAGL. Polar residues predominate over residues 1111 to 1132; it reads TQKSNSPWQANRPTAPGTSWTP. R1122 carries the omega-N-methylarginine modification. S1171 bears the Phosphoserine mark. The J domain maps to 1241–1305; that stretch reads SRWTPVSMAD…FENQGSRPLF (65 aa).

The protein belongs to the protein kinase superfamily. Ser/Thr protein kinase family.

Its subcellular location is the cytoplasm. The protein resides in the perinuclear region. It is found in the golgi apparatus. It localises to the trans-Golgi network. The protein localises to the cell junction. Its subcellular location is the focal adhesion. The protein resides in the cytoplasmic vesicle. It is found in the clathrin-coated vesicle. It carries out the reaction L-seryl-[protein] + ATP = O-phospho-L-seryl-[protein] + ADP + H(+). The enzyme catalyses L-threonyl-[protein] + ATP = O-phospho-L-threonyl-[protein] + ADP + H(+). Functionally, associates with cyclin G and CDK5. Seems to act as an auxilin homolog that is involved in the uncoating of clathrin-coated vesicles by Hsc70 in non-neuronal cells. Expression oscillates slightly during the cell cycle, peaking at G1. May play a role in clathrin-mediated endocytosis and intracellular trafficking, and in the dynamics of clathrin assembly/disassembly. This Mus musculus (Mouse) protein is Cyclin-G-associated kinase.